Reading from the N-terminus, the 361-residue chain is Beta-hexosaminidase (361 aa).

Substrate-binding positions include Asp-69, Arg-77, Arg-144, and 174–175 (KH). The Proton donor/acceptor role is filled by His-187. The Nucleophile role is filled by Asp-258.

This sequence belongs to the glycosyl hydrolase 3 family. NagZ subfamily.

The protein localises to the cytoplasm. The enzyme catalyses Hydrolysis of terminal non-reducing N-acetyl-D-hexosamine residues in N-acetyl-beta-D-hexosaminides.. The protein operates within cell wall biogenesis; peptidoglycan recycling. Functionally, plays a role in peptidoglycan recycling by cleaving the terminal beta-1,4-linked N-acetylglucosamine (GlcNAc) from peptide-linked peptidoglycan fragments, giving rise to free GlcNAc, anhydro-N-acetylmuramic acid and anhydro-N-acetylmuramic acid-linked peptides. This is Beta-hexosaminidase from Neisseria gonorrhoeae (strain NCCP11945).